The primary structure comprises 815 residues: Minichromosome loss protein 1 (815 aa).

WD repeat units lie at residues 11–50, 53–90, 93–132, 135–174, and 228–267; these read AHTD…EPDS, NHQD…EHTL, RTTL…QIFS, PAKA…LIKF, and ENHS…VVVE. Positions 306 to 362 are disordered; the sequence is LKEENDPTKPLTSSKSKNRTSKELDDLFGSDDEQSQNVNDLDGNSANEENEFINHDG. Polar residues predominate over residues 340 to 352; it reads SQNVNDLDGNSAN. One copy of the WD 6 repeat lies at 517 to 553; sequence ENESPVTISLSSSVVLVCTSAGYVRVFSRQGFPISIH.

Interacts with pof3 and pol1.

It localises to the nucleus. The protein resides in the chromosome. Its function is as follows. Has a role in regulating DNA replication complexes. Acts as a regulator of post DNA replication initiation. Associates with chromatin during G1 and S phases of mitosis. Required for the transcriptional repression of the outer repeats of the centromeric region. Acts as a polymerase alpha replication accessory factor and is important for S-phase DNA damage survival. Plays a role in lagging-strand synthesis and Ozaki fragment processing, in addition to DNA repair. The sequence is that of Minichromosome loss protein 1 (mcl1) from Schizosaccharomyces pombe (strain 972 / ATCC 24843) (Fission yeast).